The sequence spans 480 residues: Probable histone deacetylase 1-B (480 aa).

Residues 10–321 are histone deacetylase; sequence KVCYYYDGDV…WTYETAVALD (312 aa). H141 is a catalytic residue. The interval 387–480 is disordered; it reads DSVHDDSGEE…KRVKEETKSV (94 aa). Basic and acidic residues predominate over residues 401 to 416; sequence PDKRISIRSSDKRIAC. Over residues 417–427 the composition is skewed to acidic residues; it reads DEEFSDSEDEG. A compositionally biased stretch (basic and acidic residues) spans 443–480; that stretch reads VKTEEEKEGEDKKDVKEEEKAKDEKTDSKRVKEETKSV.

The protein belongs to the histone deacetylase family. HD type 1 subfamily. Found in a large complex with RBBP4 and MI-2.

The protein resides in the nucleus. It localises to the cytoplasm. It carries out the reaction N(6)-acetyl-L-lysyl-[histone] + H2O = L-lysyl-[histone] + acetate. The catalysed reaction is N(6)-acetyl-L-lysyl-[protein] + H2O = L-lysyl-[protein] + acetate. The enzyme catalyses N(6)-(2E)-butenoyl-L-lysyl-[protein] + H2O = (2E)-2-butenoate + L-lysyl-[protein]. Functionally, histone deacetylase that catalyzes the deacetylation of lysine residues on the N-terminal part of the core histones (H2A, H2B, H3 and H4). Histone deacetylation gives a tag for epigenetic repression and plays an important role in transcriptional regulation, cell cycle progression and developmental events. Histone deacetylases act via the formation of large multiprotein complexes. Also functions as a deacetylase for non-histone proteins. In addition to protein deacetylase activity, also has protein-lysine deacylase activity: acts as a protein decrotonylase by mediating decrotonylation ((2E)-butenoyl) of histones. The sequence is that of Probable histone deacetylase 1-B (hdac1-b) from Xenopus laevis (African clawed frog).